Consider the following 297-residue polypeptide: HTH-type transcriptional regulator ArgP (297 aa).

One can recognise an HTH lysR-type domain in the interval 4–60; sequence PDYRTLQALDAVIRERGFERAAQKLCITQSAVSQRIKQLENLFGQPLLVRTVPPRPT. A DNA-binding region (H-T-H motif) is located at residues 21-40; the sequence is FERAAQKLCITQSAVSQRIK.

This sequence belongs to the LysR transcriptional regulatory family. Homodimer.

In terms of biological role, controls the transcription of genes involved in arginine and lysine metabolism. This chain is HTH-type transcriptional regulator ArgP, found in Yersinia enterocolitica serotype O:8 / biotype 1B (strain NCTC 13174 / 8081).